Reading from the N-terminus, the 619-residue chain is Sorting nexin-41 (619 aa).

Residues Met-1–Gly-95 form a disordered region. The 117-residue stretch at Pro-108–Trp-224 folds into the PX domain. The a 1,2-diacyl-sn-glycero-3-phospho-(1D-myo-inositol-3-phosphate) site is built by Arg-142, Ser-144, Lys-168, and Arg-191. Residues Tyr-444–Ser-510 form a disordered region. The span at Pro-454–Ser-467 shows a compositional bias: basic and acidic residues.

It belongs to the sorting nexin family.

It localises to the endosome membrane. Its subcellular location is the endomembrane system. May be required for cytoplasm to vacuole transport (Cvt) and pexophagy. The sequence is that of Sorting nexin-41 (vsp-6) from Neurospora crassa (strain ATCC 24698 / 74-OR23-1A / CBS 708.71 / DSM 1257 / FGSC 987).